Reading from the N-terminus, the 360-residue chain is Glycerol-3-phosphate dehydrogenase [NAD(+)], cytoplasmic (360 aa).

Residues 11–16, Phe98, Lys121, and Ala155 contribute to the NAD(+) site; that span reads GSGNWG. Lys121 lines the substrate pocket. Lys206 acts as the Proton acceptor in catalysis. 2 residues coordinate NAD(+): Arg270 and Gln299. Position 270-271 (270-271) interacts with substrate; the sequence is RN.

The protein belongs to the NAD-dependent glycerol-3-phosphate dehydrogenase family. In terms of assembly, homodimer.

The protein resides in the cytoplasm. It carries out the reaction sn-glycerol 3-phosphate + NAD(+) = dihydroxyacetone phosphate + NADH + H(+). It functions in the pathway phospholipid metabolism; alpha-glycerophosphate cycle. The polypeptide is Glycerol-3-phosphate dehydrogenase [NAD(+)], cytoplasmic (Gpdh1) (Drosophila kanekoi (Fruit fly)).